A 432-amino-acid polypeptide reads, in one-letter code: GTPase Obg (432 aa).

Positions 1-159 (MKFIDTAKFT…YEVKAELKVL (159 aa)) constitute an Obg domain. An OBG-type G domain is found at 160 to 332 (ADVGFVGLPN…LLLKIAKELE (173 aa)). GTP contacts are provided by residues 166-173 (GLPNAGKS), 191-195 (FTTLN), 213-216 (DLPG), 284-287 (NKMD), and 313-315 (SGL). Mg(2+) is bound by residues S173 and T193. The OCT domain occupies 354-432 (RLEEDEEDIQ…VFEYELEWMD (79 aa)).

The protein belongs to the TRAFAC class OBG-HflX-like GTPase superfamily. OBG GTPase family. As to quaternary structure, monomer. Mg(2+) serves as cofactor.

The protein resides in the cytoplasm. Its function is as follows. An essential GTPase which binds GTP, GDP and possibly (p)ppGpp with moderate affinity, with high nucleotide exchange rates and a fairly low GTP hydrolysis rate. Plays a role in control of the cell cycle, stress response, ribosome biogenesis and in those bacteria that undergo differentiation, in morphogenesis control. In Mesoplasma florum (strain ATCC 33453 / NBRC 100688 / NCTC 11704 / L1) (Acholeplasma florum), this protein is GTPase Obg.